Here is a 352-residue protein sequence, read N- to C-terminus: MKDERIVLALKSVAPGTPLREGLEQILRAKTGGLIVIGDTAKIMEVVEGGFAINTDYSPAYLYELAKMDGAIILSEDGKKILYANAQLVPDPAIPSSETGIRHRTAERVAKQTNALVIAISQRRSVITLYQGNFKYSLSEVSVILNKANQAIATLEKYRAVLDKTLMRLTNLEFDDMVTLLDVAKALQRVEMVLRIEREIERYIWELGSEGRLISMQLEELIANVEDEGLLIIQDYSLLGPEKTPEGILSLIRTWSSEDLLDYSLIVRALGYPGSASILDQPVSPRGYRILDKIPRLPVAVIENLVQTFGNLKNIMSASIEELDDVEGIGEVRARSIKEGLKKLREQTNYTL.

Residues 3–143 (DERIVLALKS…FKYSLSEVSV (141 aa)) enclose the DAC domain. ATP contacts are provided by residues Gly-70, Leu-88, and 101–105 (IRHRT).

This sequence belongs to the DisA family. Homooctamer. Mg(2+) is required as a cofactor.

The catalysed reaction is 2 ATP = 3',3'-c-di-AMP + 2 diphosphate. Participates in a DNA-damage check-point that is active prior to asymmetric division when DNA is damaged. DisA forms globular foci that rapidly scan along the chromosomes during sporulation, searching for lesions. When a lesion is present, DisA pauses at the lesion site. This triggers a cellular response that culminates in a temporary block in sporulation initiation. In terms of biological role, also has diadenylate cyclase activity, catalyzing the condensation of 2 ATP molecules into cyclic di-AMP (c-di-AMP). c-di-AMP acts as a signaling molecule that couples DNA integrity with progression of sporulation. The rise in c-di-AMP level generated by DisA while scanning the chromosome, operates as a positive signal that advances sporulation; upon encountering a lesion, the DisA focus arrests at the damaged site and halts c-di-AMP synthesis. The protein is DNA integrity scanning protein DisA of Carboxydothermus hydrogenoformans (strain ATCC BAA-161 / DSM 6008 / Z-2901).